The following is a 155-amino-acid chain: 6,7-dimethyl-8-ribityllumazine synthase (155 aa).

Residues Phe24, 58–60 (AFE), and 82–84 (VII) contribute to the 5-amino-6-(D-ribitylamino)uracil site. 87 to 88 (ST) is a (2S)-2-hydroxy-3-oxobutyl phosphate binding site. Catalysis depends on His90, which acts as the Proton donor. Phe115 provides a ligand contact to 5-amino-6-(D-ribitylamino)uracil. Position 129 (Arg129) interacts with (2S)-2-hydroxy-3-oxobutyl phosphate.

This sequence belongs to the DMRL synthase family.

It carries out the reaction (2S)-2-hydroxy-3-oxobutyl phosphate + 5-amino-6-(D-ribitylamino)uracil = 6,7-dimethyl-8-(1-D-ribityl)lumazine + phosphate + 2 H2O + H(+). The protein operates within cofactor biosynthesis; riboflavin biosynthesis; riboflavin from 2-hydroxy-3-oxobutyl phosphate and 5-amino-6-(D-ribitylamino)uracil: step 1/2. Its function is as follows. Catalyzes the formation of 6,7-dimethyl-8-ribityllumazine by condensation of 5-amino-6-(D-ribitylamino)uracil with 3,4-dihydroxy-2-butanone 4-phosphate. This is the penultimate step in the biosynthesis of riboflavin. This chain is 6,7-dimethyl-8-ribityllumazine synthase, found in Pelodictyon phaeoclathratiforme (strain DSM 5477 / BU-1).